Consider the following 224-residue polypeptide: Transmembrane protein C16orf54 (224 aa).

Residue T4 is glycosylated (O-linked (GalNAc...) threonine). Residues 32 to 52 (IPIMLVLATLAALFILTTAVL) traverse the membrane as a helical segment. 2 disordered regions span residues 104–138 (TDRA…SNLG) and 152–203 (WGPQ…GLQP). T112 and T116 each carry phosphothreonine. The residue at position 194 (S194) is a Phosphoserine.

In terms of processing, O-glycosylated with core 1 or possibly core 8 glycans.

Its subcellular location is the membrane. The chain is Transmembrane protein C16orf54 (C16orf54) from Homo sapiens (Human).